We begin with the raw amino-acid sequence, 153 residues long: Ribosome maturation factor RimP (153 aa).

It belongs to the RimP family.

The protein localises to the cytoplasm. Functionally, required for maturation of 30S ribosomal subunits. This Coxiella burnetii (strain CbuG_Q212) (Coxiella burnetii (strain Q212)) protein is Ribosome maturation factor RimP.